The sequence spans 984 residues: Translation initiation factor IF-2 (984 aa).

Disordered stretches follow at residues 92 to 267 (KKRT…ERRR) and 280 to 392 (MNAP…EEHV). A compositionally biased stretch (low complexity) spans 104–123 (PATPEVQPVAEAPAAAPAAP). A compositionally biased stretch (basic and acidic residues) spans 124-177 (RIDEAELARREEEARRQAELIRRQEEELAEKRRLREEAEAREREQAEKAERAEQ). Positions 193–235 (DAAAAAPAKEAAKPAAAPVAAAAAAAEQQAADTKLAAQTAATQ) are enriched in low complexity. Composition is skewed to basic and acidic residues over residues 236-267 (AKED…ERRR) and 291-302 (KAPEKPQPEKAA). Low complexity predominate over residues 310–335 (PAAPAARPGAPAAPGAAAAPGAAGAG). Over residues 351–361 (PAKKKEIKTRG) the composition is skewed to basic and acidic residues. The span at 363–375 (ASGGVGRGNWRGG) shows a compositional bias: gly residues. A compositionally biased stretch (basic and acidic residues) spans 381-392 (GSNDRGGHEEHV). Residues 484 to 653 (PRAPVVTVMG…LLQAEVLELK (170 aa)) enclose the tr-type G domain. Positions 493 to 500 (GHVDHGKT) are G1. 493 to 500 (GHVDHGKT) is a binding site for GTP. The G2 stretch occupies residues 518-522 (GITQH). The G3 stretch occupies residues 539-542 (DTPG). GTP contacts are provided by residues 539 to 543 (DTPGH) and 593 to 596 (NKID). The G4 stretch occupies residues 593-596 (NKID). The tract at residues 629-631 (SAK) is G5.

This sequence belongs to the TRAFAC class translation factor GTPase superfamily. Classic translation factor GTPase family. IF-2 subfamily.

The protein localises to the cytoplasm. One of the essential components for the initiation of protein synthesis. Protects formylmethionyl-tRNA from spontaneous hydrolysis and promotes its binding to the 30S ribosomal subunits. Also involved in the hydrolysis of GTP during the formation of the 70S ribosomal complex. In Variovorax paradoxus (strain S110), this protein is Translation initiation factor IF-2.